The following is a 935-amino-acid chain: Coiled-coil domain-containing protein 191 (935 aa).

4 coiled-coil regions span residues 189–324 (RLTM…ENQQ), 366–438 (YTRS…ALLK), 554–589 (RHVFQQQLIEKQKKKLQEQQKTILELKKNQRLAEAQ), and 660–740 (KAME…LEAI). 2 disordered regions span residues 596–661 (SAVT…ILKA) and 678–715 (EKKKKQEEEKLAQLKAQEEERQKREAEEKEAQLERKRE).

The sequence is that of Coiled-coil domain-containing protein 191 (CCDC191) from Macaca fascicularis (Crab-eating macaque).